The chain runs to 303 residues: Polyisoprenyl-teichoic acid--peptidoglycan teichoic acid transferase TagU (303 aa).

Residues 1-4 (MKKK) are Cytoplasmic-facing. Residues 5–25 (ILFWVLGILGVLIIGGGIYAY) form a helical; Signal-anchor for type II membrane protein membrane-spanning segment. The Extracellular segment spans residues 26 to 303 (NVYSSVSNTL…KLRTHLEVTK (278 aa)).

The protein belongs to the LytR/CpsA/Psr (LCP) family.

It is found in the cell membrane. It participates in cell wall biogenesis. Its function is as follows. May catalyze the final step in cell wall teichoic acid biosynthesis, the transfer of the anionic cell wall polymers (APs) from their lipid-linked precursor to the cell wall peptidoglycan (PG). This Bacillus anthracis (strain A0248) protein is Polyisoprenyl-teichoic acid--peptidoglycan teichoic acid transferase TagU.